Here is a 134-residue protein sequence, read N- to C-terminus: Arsenate reductase (134 aa).

Active-site nucleophile residues include Cys11, Cys83, and Cys90. Intrachain disulfides connect Cys11–Cys83 and Cys83–Cys90.

The protein belongs to the low molecular weight phosphotyrosine protein phosphatase family. Thioredoxin-coupled ArsC subfamily.

The protein resides in the cytoplasm. The catalysed reaction is arsenate + [thioredoxin]-dithiol + H(+) = arsenite + [thioredoxin]-disulfide + H2O. Its function is as follows. Catalyzes the reduction of arsenate [As(V)] to arsenite [As(III)]. This is Arsenate reductase from Bacillus cereus (strain ATCC 14579 / DSM 31 / CCUG 7414 / JCM 2152 / NBRC 15305 / NCIMB 9373 / NCTC 2599 / NRRL B-3711).